The following is a 2025-amino-acid chain: Pericentriolar material 1 protein (2025 aa).

A disordered region spans residues 1 to 91 (MATGGGPFEE…TFPHSRYMTQ (91 aa)). Alanine 2 bears the N-acetylalanine mark. Positions 2 to 1458 (ATGGGPFEEV…TWVASNSELT (1457 aa)) are mediates interaction with DZIP1. 8 positions are modified to phosphoserine: serine 65, serine 68, serine 69, serine 93, serine 110, serine 116, serine 119, and serine 159. Residues 111 to 140 (DLDQRSIGSDSQGRATAANNKRQLSENRKP) are disordered. Residues 116–132 (SIGSDSQGRATAANNKR) show a composition bias toward polar residues. The stretch at 218–301 (KASSMREDLV…QLRALQGRQA (84 aa)) forms a coiled coil. Residues 354–390 (RDSQPPAVPDNRRQAESLSLTREISQSRNPSVSEHLP) are disordered. A compositionally biased stretch (polar residues) spans 369–385 (ESLSLTREISQSRNPSV). Position 370 is a phosphoserine (serine 370). Residue serine 372 is modified to Phosphoserine; by PLK4. Serine 384 bears the Phosphoserine mark. Lysine 399 is subject to N6-acetyllysine. 2 coiled-coil regions span residues 399 to 426 (KMRV…QHLN) and 492 to 518 (AEKL…YEQT). 2 disordered regions span residues 528 to 553 (ENTK…VTNI) and 565 to 586 (VNTN…VNSN). Over residues 531–540 (KDEETEESEY) the composition is skewed to acidic residues. Serine 593 carries the post-translational modification Phosphoserine. Positions 620–654 (AHGEDEEEEVEEEGVSGASLSSRRSSLVDEAPEDE) are disordered. The span at 623-633 (EDEEEEVEEEG) shows a compositional bias: acidic residues. Residues 634-644 (VSGASLSSRRS) are compositionally biased toward low complexity. Phosphoserine is present on serine 644. Coiled coils occupy residues 652–772 (EDEE…PDLQ) and 822–856 (SDMR…GLAE). Threonine 857 carries the phosphothreonine modification. Residues serine 859, serine 864, serine 867, and serine 870 each carry the phosphoserine modification. 2 disordered regions span residues 866 to 885 (RSDG…EKTM) and 913 to 940 (TDEE…NQNS). A compositionally biased stretch (polar residues) spans 870–879 (SENLCTPQQS). Threonine 875 carries the phosphothreonine modification. 4 positions are modified to phosphoserine: serine 957, serine 974, serine 985, and serine 988. Coiled-coil stretches lie at residues 985 to 1017 (SELS…CQTL) and 1061 to 1086 (QLTW…QNQH). 2 disordered regions span residues 1081–1105 (RQQN…PSSP) and 1149–1213 (FSQN…YDQE). Residues 1086–1096 (HPEKPRSKERG) are compositionally biased toward basic and acidic residues. Positions 1149 to 1169 (FSQNVSTPTEQQQPLAQNPSG) are enriched in polar residues. Phosphoserine is present on residues serine 1182 and serine 1185. Basic and acidic residues predominate over residues 1189–1198 (EKQRNQKQPE). Phosphoserine occurs at positions 1228, 1254, 1257, 1259, and 1260. The interval 1230-1310 (EKATNSNRKN…STQLKSRVKN (81 aa)) is disordered. The segment covering 1268-1285 (TTVTKTFKTRKASAQASL) has biased composition (polar residues). A phosphoserine mark is found at serine 1315 and serine 1317. The segment at 1319 to 1338 (SSTCEPCKNRNRHSAQTEEP) is disordered. Position 1466 is a phosphothreonine (threonine 1466). Serine 1571, serine 1695, serine 1729, serine 1766, serine 1769, serine 1777, and serine 1783 each carry phosphoserine. Residues 1720 to 1943 (KRILEGDHGS…AGSPDTESPV (224 aa)) are disordered. Positions 1756-1768 (YDAKGPKNVRSDV) are enriched in basic and acidic residues. The span at 1784–1798 (INLSKAESQALTNYG) shows a compositional bias: polar residues. A compositionally biased stretch (acidic residues) spans 1800–1816 (GEDENEDEEMEDFEESP). 4 stretches are compositionally biased toward polar residues: residues 1818 to 1828 (DIQTSLQANTE), 1849 to 1858 (ESTNVPSDQE), 1879 to 1901 (ENEQ…SSKQ), and 1925 to 1934 (AQETPESSLA). Residues serine 1959 and serine 1978 each carry the phosphoserine modification.

The protein belongs to the PCM1 family. As to quaternary structure, self-associates. Interacts with BBS4, BBS8, CETN3, HAP1, NDE1, NDEL1, MAP1LC3B, GABARAPAL2, and GABARAP. Interacts with CEP131; the interaction increases in response to ultraviolet light (UV) radiation. Associates with microtubule; association to microtubule is reduced in response to cellular stress, such as ultraviolet light (UV) radiation or heat shock, in a process that requires p38 MAP kinase signaling. Interacts with C2CD3. Interacts with CFAP263. Interacts with SSX2IP. Interacts with CCDC13. Interacts with CEP290. Interacts with PARD6A. Interacts with KIAA0753/OFIP, CEP20/FOR20 and OFD1; the interaction with CEP20/FOR20 and OFD1 may be mediated by KIAA0753/OFIP. Interacts with CCDC66. Interacts with CCDC61. Interacts with DZIP1; localizes DZIP1 and the associated BBSome to centriolar satellite. Interacts with CSTPP1, TTLL1, TPGS1 and LRRC49. Interacts with CFAP53. In terms of processing, ubiquitinated. Undergoes monoubiquitination catalyzed by the E3 ubiquitin-protein ligase MIB1 in proliferating cells, preventing cilia formation. Monoubiquitination by MIB1 is inhibited in response to cellular stress, such as ultraviolet light (UV) radiation or heat shock, resulting in cilia formation initiation. Phosphorylated on multiple serine and threonine residues by DYRK3 during the G2-to-M transition, after the nuclear-envelope breakdown. Phosphorylation by DYRK3 promotes disassembly of pericentriolar material. Phosphorylation at Ser-372 mediated by PLK4 is required to maintain the integrity of centriolar satellites. Expressed in the hippocampus and dentate gyrus, the columnar epithelial cells of bronchioles, the olfactory epithelium, the pericardium and the inner segment of the retina.

The protein resides in the cytoplasm. It is found in the cytoskeleton. The protein localises to the microtubule organizing center. It localises to the centrosome. Its subcellular location is the cytoplasmic granule. The protein resides in the centriolar satellite. It is found in the cilium basal body. In terms of biological role, required for centrosome assembly and function. Essential for the correct localization of several centrosomal proteins including CEP250, CETN3, PCNT and NEK2. Required to anchor microtubules to the centrosome. Also involved in cilium biogenesis by recruiting the BBSome, a ciliary protein complex involved in cilium biogenesis, to the centriolar satellites. Recruits the tubulin polyglutamylase complex (TPGC) to centriolar satellites. This chain is Pericentriolar material 1 protein, found in Mus musculus (Mouse).